A 608-amino-acid polypeptide reads, in one-letter code: Protein SHQ1 homolog (608 aa).

2 disordered regions span residues 487–531 (DAGS…SFYS) and 543–608 (IVYE…ASTT). Residues 489-498 (GSQGSSPQQQ) show a composition bias toward low complexity. 2 stretches are compositionally biased toward acidic residues: residues 502-524 (DDLD…DESV) and 543-579 (IVYE…EDDS). Over residues 588-608 (EAEGNSVIEQCSNSETAASTT) the composition is skewed to polar residues.

This sequence belongs to the SHQ1 family.

Its function is as follows. Required for the quantitative accumulation of H/ACA ribonucleoproteins (RNPs). This is Protein SHQ1 homolog from Drosophila melanogaster (Fruit fly).